Consider the following 180-residue polypeptide: MLAAKRYAEALIKLGQEEGKLEIFYEQLFKMFEIIKNNNEFNTIWFDLEMKRSEKKQRIKVFFGGDIDSYILNLLYLLIDKRREIILTYIPFYYKEIYDKIVGNVDVQVIVAHEIGSDVLNKISKWLLKKYGVKNPRFIVKVDKSIIGGIKLLFNNIEVDASIKGALDSMRKELVKIAIL.

Belongs to the ATPase delta chain family. As to quaternary structure, F-type ATPases have 2 components, F(1) - the catalytic core - and F(0) - the membrane proton channel. F(1) has five subunits: alpha(3), beta(3), gamma(1), delta(1), epsilon(1). F(0) has three main subunits: a(1), b(2) and c(10-14). The alpha and beta chains form an alternating ring which encloses part of the gamma chain. F(1) is attached to F(0) by a central stalk formed by the gamma and epsilon chains, while a peripheral stalk is formed by the delta and b chains.

Its subcellular location is the cell membrane. Functionally, f(1)F(0) ATP synthase produces ATP from ADP in the presence of a proton or sodium gradient. F-type ATPases consist of two structural domains, F(1) containing the extramembraneous catalytic core and F(0) containing the membrane proton channel, linked together by a central stalk and a peripheral stalk. During catalysis, ATP synthesis in the catalytic domain of F(1) is coupled via a rotary mechanism of the central stalk subunits to proton translocation. In terms of biological role, this protein is part of the stalk that links CF(0) to CF(1). It either transmits conformational changes from CF(0) to CF(1) or is implicated in proton conduction. The sequence is that of ATP synthase subunit delta from Caldicellulosiruptor bescii (strain ATCC BAA-1888 / DSM 6725 / KCTC 15123 / Z-1320) (Anaerocellum thermophilum).